The sequence spans 323 residues: 4-hydroxy-3-methylbut-2-enyl diphosphate reductase (323 aa).

[4Fe-4S] cluster is bound at residue cysteine 13. Positions 42 and 75 each coordinate (2E)-4-hydroxy-3-methylbut-2-enyl diphosphate. Dimethylallyl diphosphate contacts are provided by histidine 42 and histidine 75. Residues histidine 42 and histidine 75 each contribute to the isopentenyl diphosphate site. Cysteine 97 serves as a coordination point for [4Fe-4S] cluster. Residue histidine 125 participates in (2E)-4-hydroxy-3-methylbut-2-enyl diphosphate binding. Histidine 125 serves as a coordination point for dimethylallyl diphosphate. An isopentenyl diphosphate-binding site is contributed by histidine 125. The active-site Proton donor is glutamate 127. Threonine 168 contributes to the (2E)-4-hydroxy-3-methylbut-2-enyl diphosphate binding site. Cysteine 198 serves as a coordination point for [4Fe-4S] cluster. Residues serine 226, serine 227, asparagine 228, and serine 270 each coordinate (2E)-4-hydroxy-3-methylbut-2-enyl diphosphate. Residues serine 226, serine 227, asparagine 228, and serine 270 each coordinate dimethylallyl diphosphate. Positions 226, 227, 228, and 270 each coordinate isopentenyl diphosphate.

This sequence belongs to the IspH family. The cofactor is [4Fe-4S] cluster.

The enzyme catalyses isopentenyl diphosphate + 2 oxidized [2Fe-2S]-[ferredoxin] + H2O = (2E)-4-hydroxy-3-methylbut-2-enyl diphosphate + 2 reduced [2Fe-2S]-[ferredoxin] + 2 H(+). It carries out the reaction dimethylallyl diphosphate + 2 oxidized [2Fe-2S]-[ferredoxin] + H2O = (2E)-4-hydroxy-3-methylbut-2-enyl diphosphate + 2 reduced [2Fe-2S]-[ferredoxin] + 2 H(+). It functions in the pathway isoprenoid biosynthesis; dimethylallyl diphosphate biosynthesis; dimethylallyl diphosphate from (2E)-4-hydroxy-3-methylbutenyl diphosphate: step 1/1. Its pathway is isoprenoid biosynthesis; isopentenyl diphosphate biosynthesis via DXP pathway; isopentenyl diphosphate from 1-deoxy-D-xylulose 5-phosphate: step 6/6. In terms of biological role, catalyzes the conversion of 1-hydroxy-2-methyl-2-(E)-butenyl 4-diphosphate (HMBPP) into a mixture of isopentenyl diphosphate (IPP) and dimethylallyl diphosphate (DMAPP). Acts in the terminal step of the DOXP/MEP pathway for isoprenoid precursor biosynthesis. This Nitrosomonas europaea (strain ATCC 19718 / CIP 103999 / KCTC 2705 / NBRC 14298) protein is 4-hydroxy-3-methylbut-2-enyl diphosphate reductase.